A 676-amino-acid chain; its full sequence is Cysteine-rich receptor-like protein kinase 4 (676 aa).

Positions 1–16 (MSFFWLFPFLLHLSFA) are cleaved as a signal peptide. Over 17 to 287 (DSLSPLSAPV…ISERGKGRNS (271 aa)) the chain is Extracellular. 2 Gnk2-homologous domains span residues 31–135 (HLNH…HRNI) and 146–246 (ILLN…NYSF). 7 N-linked (GlcNAc...) asparagine glycosylation sites follow: asparagine 33, asparagine 46, asparagine 64, asparagine 152, asparagine 181, asparagine 243, and asparagine 248. Residues 252–279 (TRSSSPPSLPPRSTPQQQLKLAPPPLIS) are disordered. Asparagine 286 carries N-linked (GlcNAc...) asparagine glycosylation. Residues 288–308 (SVIIVVVVPIIALLLLFVAFF) traverse the membrane as a helical segment. The Cytoplasmic segment spans residues 309-676 (SLRAKKTRTN…DASITNVTPR (368 aa)). A Protein kinase domain is found at 351–631 (FCETNKLGQG…QMLTTSSIAL (281 aa)). ATP is bound by residues 357–365 (LGQGGFGEV) and lysine 379. Position 424 is a phosphotyrosine (tyrosine 424). Aspartate 476 acts as the Proton acceptor in catalysis. Position 516 is a phosphothreonine (threonine 516). At tyrosine 524 the chain carries Phosphotyrosine.

Belongs to the protein kinase superfamily. Ser/Thr protein kinase family. CRK subfamily.

It localises to the membrane. It carries out the reaction L-seryl-[protein] + ATP = O-phospho-L-seryl-[protein] + ADP + H(+). It catalyses the reaction L-threonyl-[protein] + ATP = O-phospho-L-threonyl-[protein] + ADP + H(+). The polypeptide is Cysteine-rich receptor-like protein kinase 4 (CRK4) (Arabidopsis thaliana (Mouse-ear cress)).